The sequence spans 267 residues: Undecaprenyl-diphosphatase (267 aa).

The next 7 helical transmembrane spans lie at 1-21 (MTLWQAFILSLIQGITEFLPI), 39-59 (AGVAFDAFTGLGTLTAVLFYY), 85-105 (AKLGNQLIVATLPALLIGFMV), 117-137 (LLIASTTMIFAIFLAAADFWG), 189-209 (FSFLQSIPISAAAGGYGLWKL), 220-240 (LIALSYVTATLAAYVCIALFI), and 246-266 (VGMMPHVIYRLLLGAYLFFVF).

The protein belongs to the UppP family.

The protein localises to the cell inner membrane. It catalyses the reaction di-trans,octa-cis-undecaprenyl diphosphate + H2O = di-trans,octa-cis-undecaprenyl phosphate + phosphate + H(+). Catalyzes the dephosphorylation of undecaprenyl diphosphate (UPP). Confers resistance to bacitracin. In Dichelobacter nodosus (strain VCS1703A), this protein is Undecaprenyl-diphosphatase.